We begin with the raw amino-acid sequence, 139 residues long: NADH-quinone oxidoreductase subunit A (139 aa).

3 helical membrane passes run 16–36 (GLFIIAVFALCALMIGAASLL), 69–89 (LVAMLFVIFDIEAVFLFAWAV), and 94–114 (VGWEGFAGAAVFIFILLAGLV).

It belongs to the complex I subunit 3 family. NDH-1 is composed of 14 different subunits. Subunits NuoA, H, J, K, L, M, N constitute the membrane sector of the complex.

The protein localises to the cell inner membrane. The catalysed reaction is a quinone + NADH + 5 H(+)(in) = a quinol + NAD(+) + 4 H(+)(out). Its function is as follows. NDH-1 shuttles electrons from NADH, via FMN and iron-sulfur (Fe-S) centers, to quinones in the respiratory chain. The immediate electron acceptor for the enzyme in this species is believed to be ubiquinone. Couples the redox reaction to proton translocation (for every two electrons transferred, four hydrogen ions are translocated across the cytoplasmic membrane), and thus conserves the redox energy in a proton gradient. The chain is NADH-quinone oxidoreductase subunit A from Chromohalobacter salexigens (strain ATCC BAA-138 / DSM 3043 / CIP 106854 / NCIMB 13768 / 1H11).